Reading from the N-terminus, the 96-residue chain is Large ribosomal subunit protein eL43 (96 aa).

Zn(2+) is bound by residues Cys-41, Cys-44, Cys-59, and Cys-62. The C4-type zinc-finger motif lies at 41–62 (CPVCAFPKLKRAGTSIWVCEKC).

The protein belongs to the eukaryotic ribosomal protein eL43 family. Putative zinc-binding subfamily. As to quaternary structure, part of the 50S ribosomal subunit. Zn(2+) is required as a cofactor.

Functionally, binds to the 23S rRNA. This is Large ribosomal subunit protein eL43 from Methanococcus maripaludis (strain DSM 14266 / JCM 13030 / NBRC 101832 / S2 / LL).